A 66-amino-acid polypeptide reads, in one-letter code: Large ribosomal subunit protein bL35 (66 aa).

Over residues M1 to R16 the composition is skewed to basic residues. Positions M1 to G21 are disordered.

Belongs to the bacterial ribosomal protein bL35 family.

The protein is Large ribosomal subunit protein bL35 of Lactococcus lactis subsp. cremoris (strain MG1363).